A 186-amino-acid polypeptide reads, in one-letter code: Ribosome-recycling factor (186 aa).

This sequence belongs to the RRF family.

The protein localises to the cytoplasm. Responsible for the release of ribosomes from messenger RNA at the termination of protein biosynthesis. May increase the efficiency of translation by recycling ribosomes from one round of translation to another. The chain is Ribosome-recycling factor from Brucella melitensis biotype 2 (strain ATCC 23457).